A 284-amino-acid polypeptide reads, in one-letter code: Quinate/shikimate dehydrogenase (NAD(+)) (284 aa).

2 residues coordinate shikimate: serine 18 and threonine 70. Residues 18 to 20 (SRT) and threonine 70 contribute to the L-quinate site. Tyrosine 73 (proton acceptor) is an active-site residue. Lysine 74, asparagine 95, and aspartate 111 together coordinate shikimate. Residues lysine 74, asparagine 95, and aspartate 111 each contribute to the L-quinate site. Residues 137–138 (GG), aspartate 159, arginine 164, 203–206 (TPMG), alanine 214, valine 229, and glycine 252 each bind NAD(+). Glutamine 259 is a shikimate binding site. Glutamine 259 serves as a coordination point for L-quinate.

It belongs to the shikimate dehydrogenase family. In terms of assembly, homodimer.

The enzyme catalyses L-quinate + NAD(+) = 3-dehydroquinate + NADH + H(+). It catalyses the reaction shikimate + NAD(+) = 3-dehydroshikimate + NADH + H(+). Its pathway is metabolic intermediate biosynthesis; chorismate biosynthesis; chorismate from D-erythrose 4-phosphate and phosphoenolpyruvate: step 4/7. It functions in the pathway aromatic compound metabolism; 3,4-dihydroxybenzoate biosynthesis; 3-dehydroquinate from D-quinate (NAD(+) route). Involved in the biosynthesis of the chorismate, which leads to the biosynthesis of aromatic amino acids, and plays a key role in the quinate degradation pathway. Catalyzes the NAD(+)-dependent oxidation of both quinate and shikimate to 3-dehydroquinate and 3-dehydroshikimate, respectively. It can only use NAD. This Corynebacterium efficiens (strain DSM 44549 / YS-314 / AJ 12310 / JCM 11189 / NBRC 100395) protein is Quinate/shikimate dehydrogenase (NAD(+)).